A 1374-amino-acid chain; its full sequence is DNA-directed RNA polymerase subunit beta (1374 aa).

It belongs to the RNA polymerase beta chain family. In terms of assembly, the RNAP catalytic core consists of 2 alpha, 1 beta, 1 beta' and 1 omega subunit. When a sigma factor is associated with the core the holoenzyme is formed, which can initiate transcription.

The enzyme catalyses RNA(n) + a ribonucleoside 5'-triphosphate = RNA(n+1) + diphosphate. Functionally, DNA-dependent RNA polymerase catalyzes the transcription of DNA into RNA using the four ribonucleoside triphosphates as substrates. The chain is DNA-directed RNA polymerase subunit beta from Acidovorax sp. (strain JS42).